The sequence spans 200 residues: dITP/XTP pyrophosphatase (200 aa).

Residue 7–12 (TSNKHK) coordinates substrate. Mg(2+) is bound by residues Glu-38 and Asp-73. The Proton acceptor role is filled by Asp-73. Residues Ser-74, 154-157 (FGYD), Lys-177, and 182-183 (HR) contribute to the substrate site.

This sequence belongs to the HAM1 NTPase family. Homodimer. The cofactor is Mg(2+).

It catalyses the reaction XTP + H2O = XMP + diphosphate + H(+). It carries out the reaction dITP + H2O = dIMP + diphosphate + H(+). The catalysed reaction is ITP + H2O = IMP + diphosphate + H(+). Functionally, pyrophosphatase that catalyzes the hydrolysis of nucleoside triphosphates to their monophosphate derivatives, with a high preference for the non-canonical purine nucleotides XTP (xanthosine triphosphate), dITP (deoxyinosine triphosphate) and ITP. Seems to function as a house-cleaning enzyme that removes non-canonical purine nucleotides from the nucleotide pool, thus preventing their incorporation into DNA/RNA and avoiding chromosomal lesions. The protein is dITP/XTP pyrophosphatase of Campylobacter jejuni subsp. jejuni serotype O:2 (strain ATCC 700819 / NCTC 11168).